We begin with the raw amino-acid sequence, 262 residues long: Putative ankyrin repeat protein R848 (262 aa).

7 ANK repeats span residues 8 to 37 (SNDY…NVTH), 38 to 67 (DNNY…DIRD), 68 to 97 (CRDY…NIRA), 99 to 127 (DDYA…NFRA), 128 to 157 (DNDY…DIRA), 159 to 187 (DDYA…DFRS), and 189 to 217 (NNAS…DVNT).

This chain is Putative ankyrin repeat protein R848, found in Acanthamoeba polyphaga (Amoeba).